The primary structure comprises 384 residues: S-adenosylmethionine synthase (384 aa).

H15 contacts ATP. D17 contacts Mg(2+). E43 lines the K(+) pocket. Residues E56 and Q99 each contribute to the L-methionine site. The flexible loop stretch occupies residues 99-109 (QSADINQGVDR). Residues 164–166 (DAK), 230–231 (RF), D239, 245–246 (RK), A262, and K266 each bind ATP. Position 239 (D239) interacts with L-methionine. L-methionine is bound at residue K270.

It belongs to the AdoMet synthase family. Homotetramer; dimer of dimers. The cofactor is Mg(2+). K(+) serves as cofactor.

Its subcellular location is the cytoplasm. The catalysed reaction is L-methionine + ATP + H2O = S-adenosyl-L-methionine + phosphate + diphosphate. The protein operates within amino-acid biosynthesis; S-adenosyl-L-methionine biosynthesis; S-adenosyl-L-methionine from L-methionine: step 1/1. In terms of biological role, catalyzes the formation of S-adenosylmethionine (AdoMet) from methionine and ATP. The overall synthetic reaction is composed of two sequential steps, AdoMet formation and the subsequent tripolyphosphate hydrolysis which occurs prior to release of AdoMet from the enzyme. This Haemophilus influenzae (strain ATCC 51907 / DSM 11121 / KW20 / Rd) protein is S-adenosylmethionine synthase.